Reading from the N-terminus, the 199-residue chain is NAD(P)H dehydrogenase (quinone) (199 aa).

The region spanning 4–190 (VLVLYYSAYG…AGARYQGQVI (187 aa)) is the Flavodoxin-like domain. FMN is bound by residues 10-15 (SAYGHI) and 78-80 (TRF). Tyrosine 12 is an NAD(+) binding site. Tryptophan 98 serves as a coordination point for substrate. Residues 113–119 (STATQHG) and histidine 134 each bind FMN.

It belongs to the WrbA family. FMN serves as cofactor.

The catalysed reaction is a quinone + NADH + H(+) = a quinol + NAD(+). It catalyses the reaction a quinone + NADPH + H(+) = a quinol + NADP(+). The chain is NAD(P)H dehydrogenase (quinone) from Rhodopseudomonas palustris (strain BisA53).